Reading from the N-terminus, the 216-residue chain is Fibroblast growth factor 19 (216 aa).

The signal sequence occupies residues 1–24 (MRSGCVVVHVWILAGLWLAVAGRP). 2 disulfide bridges follow: Cys-58–Cys-70 and Cys-102–Cys-120.

This sequence belongs to the heparin-binding growth factors family. In terms of assembly, interacts with FGFR1, FGFR2, FGFR3 and FGFR4. Affinity between fibroblast growth factors (FGFs) and their receptors is increased by KL, KLB and heparan sulfate glycosaminoglycans that function as coreceptors. Interacts with KL; this interaction is direct. Interacts with KLB; this interaction is direct. Interacts with FGFR4 in the presence of heparin, KL or KLB. Interacts with MALRD1. As to expression, expressed in fetal brain, cartilage, retina, and adult gall bladder.

The protein localises to the secreted. Functionally, involved in the suppression of bile acid biosynthesis through down-regulation of CYP7A1 expression, following positive regulation of the JNK and ERK1/2 cascades. Stimulates glucose uptake in adipocytes. Activity requires the presence of KLB and FGFR4. The sequence is that of Fibroblast growth factor 19 (FGF19) from Homo sapiens (Human).